The primary structure comprises 401 residues: tRNA(Met) cytidine acetate ligase (401 aa).

Residues 7–20 (IVEYNPFHNGHLYH), Gly101, Asn160, and 185–186 (RI) each bind ATP.

It belongs to the TmcAL family.

It localises to the cytoplasm. The enzyme catalyses cytidine(34) in elongator tRNA(Met) + acetate + ATP = N(4)-acetylcytidine(34) in elongator tRNA(Met) + AMP + diphosphate. Its function is as follows. Catalyzes the formation of N(4)-acetylcytidine (ac(4)C) at the wobble position of elongator tRNA(Met), using acetate and ATP as substrates. First activates an acetate ion to form acetyladenylate (Ac-AMP) and then transfers the acetyl group to tRNA to form ac(4)C34. This is tRNA(Met) cytidine acetate ligase from Geobacillus sp. (strain WCH70).